A 416-amino-acid polypeptide reads, in one-letter code: Transcription factor LATE FLOWERING (416 aa).

Composition is skewed to low complexity over residues 176–186 (STTTTTTALPP) and 200–212 (TSPTTKTTTTSET). 2 disordered regions span residues 176 to 226 (STTT…AGGS) and 276 to 311 (LGGPASASDPSSRPPPPPQRPRRKNVRISSDPQTVA). The interval 303-316 (ISSDPQTVAARLRR) is basic motif; degenerate. A bHLH domain is found at 303-352 (ISSDPQTVAARLRRERVSERLRVLQRLVPGGSKMDTATMLDEAASYLKFL). The segment at 317–352 (ERVSERLRVLQRLVPGGSKMDTATMLDEAASYLKFL) is helix-loop-helix motif.

It belongs to the bHLH protein family. Interacts with PIL13 and PIL15.

The protein localises to the nucleus. Transcription factor involved in the negative regulation of flowering. May be involved in the repression of the flowering factor GI and HD1 by interacting with PIL13 and PIL15 and competing with PRR1. Possesses transactivation activity in yeast. The protein is Transcription factor LATE FLOWERING of Oryza sativa subsp. japonica (Rice).